A 61-amino-acid polypeptide reads, in one-letter code: Photosystem II reaction center protein Z (61 aa).

The next 2 membrane-spanning stretches (helical) occupy residues 5-25 (LTAL…VALA) and 38-58 (TKGF…DGVA).

Belongs to the PsbZ family. As to quaternary structure, PSII is composed of 1 copy each of membrane proteins PsbA, PsbB, PsbC, PsbD, PsbE, PsbF, PsbH, PsbI, PsbJ, PsbK, PsbL, PsbM, PsbT, PsbX, PsbY, PsbZ, Psb30/Ycf12, at least 3 peripheral proteins of the oxygen-evolving complex and a large number of cofactors. It forms dimeric complexes.

It is found in the plastid. The protein localises to the chloroplast thylakoid membrane. Functionally, may control the interaction of photosystem II (PSII) cores with the light-harvesting antenna, regulates electron flow through the 2 photosystem reaction centers. PSII is a light-driven water plastoquinone oxidoreductase, using light energy to abstract electrons from H(2)O, generating a proton gradient subsequently used for ATP formation. The sequence is that of Photosystem II reaction center protein Z from Phaeodactylum tricornutum (strain CCAP 1055/1).